The chain runs to 723 residues: Catalase-peroxidase (723 aa).

Residues 96–224 (WHAAGTYRIQ…LAAVQMGLIY (129 aa)) constitute a cross-link (tryptophyl-tyrosyl-methioninium (Trp-Tyr) (with M-250)). H97 functions as the Proton acceptor in the catalytic mechanism. The tryptophyl-tyrosyl-methioninium (Tyr-Met) (with W-96) cross-link spans 224 to 250 (YVNPEGVNSQPDPIKTGEQVRVTFARM). H265 provides a ligand contact to heme b.

The protein belongs to the peroxidase family. Peroxidase/catalase subfamily. In terms of assembly, homodimer or homotetramer. The cofactor is heme b. Post-translationally, formation of the three residue Trp-Tyr-Met cross-link is important for the catalase, but not the peroxidase activity of the enzyme.

The catalysed reaction is H2O2 + AH2 = A + 2 H2O. It catalyses the reaction 2 H2O2 = O2 + 2 H2O. In terms of biological role, bifunctional enzyme with both catalase and broad-spectrum peroxidase activity. The polypeptide is Catalase-peroxidase (Marinobacter nauticus (strain ATCC 700491 / DSM 11845 / VT8) (Marinobacter aquaeolei)).